Consider the following 349-residue polypeptide: ATPase GET3 (349 aa).

An ATP-binding site is contributed by 26–33 (KGGVGKTT). Aspartate 57 is an active-site residue. ATP is bound by residues glutamate 242 and asparagine 269. Residues cysteine 281 and cysteine 284 each contribute to the Zn(2+) site.

This sequence belongs to the arsA ATPase family. As to quaternary structure, homodimer. Component of the Golgi to ER traffic (GET) complex, which is composed of GET1, GET2 and GET3. Within the complex, GET1 and GET2 form a heterotetramer which is stabilized by phosphatidylinositol binding and which binds to the GET3 homodimer. Interacts with the chloride channel protein GEF1.

Its subcellular location is the cytoplasm. The protein localises to the endoplasmic reticulum. The protein resides in the golgi apparatus. Functionally, ATPase required for the post-translational delivery of tail-anchored (TA) proteins to the endoplasmic reticulum. Recognizes and selectively binds the transmembrane domain of TA proteins in the cytosol. This complex then targets to the endoplasmic reticulum by membrane-bound receptors GET1 and GET2, where the tail-anchored protein is released for insertion. This process is regulated by ATP binding and hydrolysis. ATP binding drives the homodimer towards the closed dimer state, facilitating recognition of newly synthesized TA membrane proteins. ATP hydrolysis is required for insertion. Subsequently, the homodimer reverts towards the open dimer state, lowering its affinity for the GET1-GET2 receptor, and returning it to the cytosol to initiate a new round of targeting. Cooperates with the HDEL receptor ERD2 to mediate the ATP-dependent retrieval of resident ER proteins that contain a C-terminal H-D-E-L retention signal from the Golgi to the ER. Involved in low-level resistance to the oxyanions arsenite and arsenate, and in heat tolerance. This is ATPase GET3 from Candida tropicalis (strain ATCC MYA-3404 / T1) (Yeast).